Here is a 127-residue protein sequence, read N- to C-terminus: Protein chibby homolog 1 (127 aa).

The span at 1-10 (MPLFGSTFSP) shows a compositional bias: polar residues. Residues 1–26 (MPLFGSTFSPKKTPPRKSASLSNLHN) are disordered. A phosphoserine mark is found at Ser9 and Ser20. Residues 60–112 (IAETGISGGVDRREAQRLRRRNQQLEEENNLLRLKVDILLDMLSETTAESHLM) form a minimal region for the interaction with PKD2 region. Residues 68-125 (GVDRREAQRLRRRNQQLEEENNLLRLKVDILLDMLSETTAESHLMEKELDELKSVSRR) are a coiled coil. The interval 77-98 (LRRRNQQLEEENNLLRLKVDIL) is leucine-zipper; mediates homodimerization.

It belongs to the chibby family. Homodimer. Homodimerization is essential for nuclear localization and interaction with KPNA4 but is dispensable for interaction with CTNNB1. Interacts with polycystin-2/PKD2 and GM130. Interacts with the C-terminal region of CTNNB1. Interacts (C-terminus) with TCIM (C-terminus), TCIM competes with CTNNB1 for the interaction with CBY1. Interacts with FAM92A; this interaction facilitates targeting of FAM92A to cilium basal body. Interacts with CIBAR2. Interacts with KPNA4.

The protein resides in the nucleus speckle. Its subcellular location is the cytoplasm. It localises to the cytoskeleton. It is found in the cilium basal body. The protein localises to the microtubule organizing center. The protein resides in the centrosome. Its subcellular location is the centriole. It localises to the golgi apparatus. It is found in the trans-Golgi network. The protein localises to the cell projection. The protein resides in the cilium. Its subcellular location is the flagellum. It localises to the nucleus. Its function is as follows. Inhibits the Wnt/Wingless pathway by binding to CTNNB1/beta-catenin and inhibiting beta-catenin-mediated transcriptional activation through competition with TCF/LEF transcription factors. Has also been shown to play a role in regulating the intracellular trafficking of polycystin-2/PKD2 and possibly of other intracellular proteins. Promotes adipocyte and cardiomyocyte differentiation. In Bos taurus (Bovine), this protein is Protein chibby homolog 1 (CBY1).